We begin with the raw amino-acid sequence, 1270 residues long: DNA-directed RNA polymerase subunit beta (1270 aa).

It belongs to the RNA polymerase beta chain family. The RNAP catalytic core consists of 2 alpha, 1 beta, 1 beta' and 1 omega subunit. When a sigma factor is associated with the core the holoenzyme is formed, which can initiate transcription.

It catalyses the reaction RNA(n) + a ribonucleoside 5'-triphosphate = RNA(n+1) + diphosphate. In terms of biological role, DNA-dependent RNA polymerase catalyzes the transcription of DNA into RNA using the four ribonucleoside triphosphates as substrates. The chain is DNA-directed RNA polymerase subunit beta from Flavobacterium johnsoniae (strain ATCC 17061 / DSM 2064 / JCM 8514 / BCRC 14874 / CCUG 350202 / NBRC 14942 / NCIMB 11054 / UW101) (Cytophaga johnsonae).